The following is a 360-amino-acid chain: Histidinol-phosphate aminotransferase (360 aa).

Residue K219 is modified to N6-(pyridoxal phosphate)lysine.

The protein belongs to the class-II pyridoxal-phosphate-dependent aminotransferase family. Histidinol-phosphate aminotransferase subfamily. As to quaternary structure, homodimer. The cofactor is pyridoxal 5'-phosphate.

The enzyme catalyses L-histidinol phosphate + 2-oxoglutarate = 3-(imidazol-4-yl)-2-oxopropyl phosphate + L-glutamate. It participates in amino-acid biosynthesis; L-histidine biosynthesis; L-histidine from 5-phospho-alpha-D-ribose 1-diphosphate: step 7/9. The protein is Histidinol-phosphate aminotransferase of Jannaschia sp. (strain CCS1).